The chain runs to 309 residues: Isoaspartyl peptidase/L-asparaginase (309 aa).

Thr-166 serves as the catalytic Nucleophile. Residues 194-197 and 217-220 each bind substrate; these read RVGD and TGHG.

Belongs to the Ntn-hydrolase family. Heterodimer of an alpha and beta chain produced by autocleavage. Post-translationally, cleaved into an alpha and beta chain by autocatalysis; this activates the enzyme. The N-terminal residue of the beta subunit is responsible for the nucleophile hydrolase activity.

The protein localises to the cytoplasm. It carries out the reaction L-asparagine + H2O = L-aspartate + NH4(+). The catalysed reaction is Cleavage of a beta-linked Asp residue from the N-terminus of a polypeptide.. Its function is as follows. Has both L-asparaginase and beta-aspartyl peptidase activity. Does not have aspartylglucosaminidase activity and is inactive toward GlcNAc-L-Asn. Likewise, has no activity toward glutamine. The chain is Isoaspartyl peptidase/L-asparaginase (asrgl1) from Xenopus laevis (African clawed frog).